We begin with the raw amino-acid sequence, 75 residues long: Small ribosomal subunit protein bS18 (75 aa).

The protein belongs to the bacterial ribosomal protein bS18 family. In terms of assembly, part of the 30S ribosomal subunit. Forms a tight heterodimer with protein bS6.

Functionally, binds as a heterodimer with protein bS6 to the central domain of the 16S rRNA, where it helps stabilize the platform of the 30S subunit. The protein is Small ribosomal subunit protein bS18 of Photobacterium profundum (strain SS9).